Reading from the N-terminus, the 199-residue chain is MARTAHIVRETSESHIDLELNLDGTGKTDIDTSVPFYNHMMTALGKHSLIDLTIHAHGDTDIDVHHTVEDTAIVFGEALKQALGDKKGIRRFADATVPLDEALAKAVVDISGRPYCVCSGEPEGYEFCMIGGHFTGSLVRHVMESIAFHAGICLHMQVLAGRDPHHIAEAEFKALARALRFAVEIDPRVDGVPSTKGAL.

It belongs to the imidazoleglycerol-phosphate dehydratase family.

It is found in the cytoplasm. It catalyses the reaction D-erythro-1-(imidazol-4-yl)glycerol 3-phosphate = 3-(imidazol-4-yl)-2-oxopropyl phosphate + H2O. It participates in amino-acid biosynthesis; L-histidine biosynthesis; L-histidine from 5-phospho-alpha-D-ribose 1-diphosphate: step 6/9. This is Imidazoleglycerol-phosphate dehydratase from Bifidobacterium longum (strain NCC 2705).